The following is a 1132-amino-acid chain: Sentrin-specific protease 6 (1132 aa).

Disordered stretches follow at residues 23 to 51 (SKRDGGFKNNWSFDHEEESEGDADKDGAN) and 327 to 388 (LPGG…VPST). Phosphoserine is present on residues serine 41, serine 355, serine 356, serine 371, and serine 373. Phosphothreonine is present on threonine 436. Lysine 648 participates in a covalent cross-link: Glycyl lysine isopeptide (Lys-Gly) (interchain with G-Cter in SUMO2). Residues 686–1132 (ISVTNEDLHC…QYASASGGSE (447 aa)) are protease. Catalysis depends on residues histidine 785 and aspartate 936. Serine 938 is modified (phosphoserine). Residue cysteine 1049 is part of the active site. Phosphoserine is present on serine 1131.

The protein belongs to the peptidase C48 family. In terms of assembly, interacts with RXRA. Forms a complex with KAT5-TIP60 and UBE2I in response to UV irradiation. Interacts with RPA1 to maintain it in hyposumoylated state during S phase preventing DNA repair initiation.

Its subcellular location is the nucleus. Its pathway is protein modification; protein sumoylation. Its function is as follows. Protease that deconjugates SUMO1, SUMO2 and SUMO3 from targeted proteins. Processes preferentially poly-SUMO2 and poly-SUMO3 chains, but does not efficiently process SUMO1, SUMO2 and SUMO3 precursors. Deconjugates SUMO1 from RXRA, leading to transcriptional activation. Involved in chromosome alignment and spindle assembly, by regulating the kinetochore CENPH-CENPI-CENPK complex. Desumoylates PML and CENPI, protecting them from degradation by the ubiquitin ligase RNF4, which targets polysumoylated proteins for proteasomal degradation. Also desumoylates RPA1, thus preventing recruitment of RAD51 to the DNA damage foci to initiate DNA repair through homologous recombination. The protein is Sentrin-specific protease 6 (Senp6) of Mus musculus (Mouse).